Here is a 483-residue protein sequence, read N- to C-terminus: Zinc metalloproteinase/disintegrin (483 aa).

An N-terminal signal peptide occupies residues 1 to 20 (MIQVLLVTICLAVFPYQGSS). Residues 21-190 (IILESGNVND…KASQLYLTPE (170 aa)) constitute a propeptide that is removed on maturation. Residues 197–395 (RYIELAIVVD…RNPQCILNAP (199 aa)) enclose the Peptidase M12B domain. E200 provides a ligand contact to Ca(2+). N263 carries an N-linked (GlcNAc...) asparagine glycan. Ca(2+) is bound at residue D284. An N-linked (GlcNAc...) asparagine glycan is attached at N293. Disulfide bonds link C308/C390, C352/C374, and C354/C357. H333 serves as a coordination point for Zn(2+). E334 is an active-site residue. H337 and H343 together coordinate Zn(2+). Ca(2+) is bound by residues C390 and N393. Residues 396–413 (LRTDTVSTPVSGNEFLEA) constitute a propeptide that is removed on maturation. Residues 403-483 (TPVSGNEFLE…SNDCPRWNDL (81 aa)) enclose the Disintegrin domain. 6 cysteine pairs are disulfide-bonded: C417–C432, C419–C427, C426–C449, C440–C446, C445–C470, and C458–C477. Residues 462–464 (RGD) carry the Cell attachment site motif.

Belongs to the venom metalloproteinase (M12B) family. P-II subfamily. P-IIa sub-subfamily. Monomeric (disintegrin). Zn(2+) is required as a cofactor. Expressed by the venom gland.

The protein localises to the secreted. Its function is as follows. Impairs hemostasis in the envenomed animal. Inhibits platelet aggregation induced by ADP, thrombin, platelet-activating factor and collagen. Acts by inhibiting fibrinogen interaction with platelet receptors GPIIb/GPIIIa (ITGA2B/ITGB3). The protein is Zinc metalloproteinase/disintegrin of Protobothrops flavoviridis (Habu).